The following is a 507-amino-acid chain: Dihydrolipoyl dehydrogenase 2, mitochondrial (507 aa).

The N-terminal 36 residues, 1–36, are a transit peptide targeting the mitochondrion; that stretch reads MAMASLARRKAYFLTRNISNSPTDAFRFSFSLTRGF. FAD-binding positions include 73–82, Lys91, Gly155, and 184–186; these read EKRGALGGTC and TGS. Cys82 and Cys87 are disulfide-bonded. NAD(+)-binding positions include 221-228, Glu244, Val278, and Gly313; that span reads GAGYIGLE. FAD contacts are provided by residues Asp354 and 360–363; that span reads MLAH. Residue His486 is the Proton acceptor of the active site.

Belongs to the class-I pyridine nucleotide-disulfide oxidoreductase family. In terms of assembly, homodimer. Part of both the glycine cleavage system composed of four proteins: P, T, L and H and of the pyruvate dehydrogenase complex containing multiple copies of three enzymatic components: pyruvate dehydrogenase (E1), dihydrolipoamide acetyltransferase (E2) and lipoamide dehydrogenase (E3). Requires FAD as cofactor. S-nytrosylated at unknown positions. In terms of tissue distribution, preferentially expressed in roots, flowers and siliques and at a lower level in stems and leaves.

The protein resides in the mitochondrion matrix. It carries out the reaction N(6)-[(R)-dihydrolipoyl]-L-lysyl-[protein] + NAD(+) = N(6)-[(R)-lipoyl]-L-lysyl-[protein] + NADH + H(+). Lipoamide dehydrogenase is a component of the glycine decarboxylase (GDC) or glycine cleavage system as well as of the alpha-ketoacid dehydrogenase complexes. LPD1 is probably the protein most often associated with the glycine decarboxylase complex while LPD2 is probably incorporated into alpha-ketoacid dehydrogenase complexes. The chain is Dihydrolipoyl dehydrogenase 2, mitochondrial (LPD2) from Arabidopsis thaliana (Mouse-ear cress).